The chain runs to 184 residues: Putative lyase MJ0807 (184 aa).

It belongs to the chorismate pyruvate-lyase type 2 family.

The sequence is that of Putative lyase MJ0807 from Methanocaldococcus jannaschii (strain ATCC 43067 / DSM 2661 / JAL-1 / JCM 10045 / NBRC 100440) (Methanococcus jannaschii).